Reading from the N-terminus, the 140-residue chain is Large-conductance mechanosensitive channel (140 aa).

A run of 2 helical transmembrane segments spans residues 16-36 (VVDL…VDSI) and 86-106 (GSFL…FLMV).

This sequence belongs to the MscL family. In terms of assembly, homopentamer.

The protein resides in the cell inner membrane. Functionally, channel that opens in response to stretch forces in the membrane lipid bilayer. May participate in the regulation of osmotic pressure changes within the cell. This Anaeromyxobacter sp. (strain K) protein is Large-conductance mechanosensitive channel.